We begin with the raw amino-acid sequence, 71 residues long: UPF0352 protein VCM66_1964 (71 aa).

The protein belongs to the UPF0352 family.

This chain is UPF0352 protein VCM66_1964, found in Vibrio cholerae serotype O1 (strain M66-2).